The chain runs to 415 residues: Tyrosine--tRNA ligase (415 aa).

Tyr-34 is a binding site for L-tyrosine. The short motif at 39–48 is the 'HIGH' region element; it reads PTSDSLTVGH. Residues Tyr-164 and Gln-168 each coordinate L-tyrosine. The 'KMSKS' region motif lies at 225–229; that stretch reads KFGKS. Lys-228 contacts ATP. The region spanning 348 to 414 is the S4 RNA-binding domain; it reads IPLSEALVKT…GKKNNSLIIL (67 aa).

Belongs to the class-I aminoacyl-tRNA synthetase family. TyrS type 1 subfamily. In terms of assembly, homodimer.

It is found in the cytoplasm. It carries out the reaction tRNA(Tyr) + L-tyrosine + ATP = L-tyrosyl-tRNA(Tyr) + AMP + diphosphate + H(+). Catalyzes the attachment of tyrosine to tRNA(Tyr) in a two-step reaction: tyrosine is first activated by ATP to form Tyr-AMP and then transferred to the acceptor end of tRNA(Tyr). The sequence is that of Tyrosine--tRNA ligase from Phytoplasma australiense.